A 390-amino-acid chain; its full sequence is GDSL esterase/lipase At1g28640 (390 aa).

An N-terminal signal peptide occupies residues 1-26; that stretch reads MASSLEKLISSFLLVLYSTTIIVASS. Catalysis depends on serine 42, which acts as the Nucleophile. Asparagine 105, asparagine 138, and asparagine 321 each carry an N-linked (GlcNAc...) asparagine glycan. Residues aspartate 346 and histidine 349 contribute to the active site. Asparagine 364 carries an N-linked (GlcNAc...) asparagine glycan.

Belongs to the 'GDSL' lipolytic enzyme family.

It is found in the secreted. In Arabidopsis thaliana (Mouse-ear cress), this protein is GDSL esterase/lipase At1g28640.